The primary structure comprises 466 residues: Ribulose bisphosphate carboxylase large chain (466 aa).

Lys4 is subject to N6,N6,N6-trimethyllysine. Asn113 and Thr163 together coordinate substrate. The active-site Proton acceptor is the Lys165. Lys167 serves as a coordination point for substrate. Lys191, Asp193, and Glu194 together coordinate Mg(2+). At Lys191 the chain carries N6-carboxylysine. The Proton acceptor role is filled by His284. The substrate site is built by Arg285, His317, and Ser369.

The protein belongs to the RuBisCO large chain family. Type I subfamily. In terms of assembly, heterohexadecamer of 8 large chains and 8 small chains; disulfide-linked. The disulfide link is formed within the large subunit homodimers. The cofactor is Mg(2+). The disulfide bond which can form in the large chain dimeric partners within the hexadecamer appears to be associated with oxidative stress and protein turnover.

The protein resides in the plastid. Its subcellular location is the chloroplast. The catalysed reaction is 2 (2R)-3-phosphoglycerate + 2 H(+) = D-ribulose 1,5-bisphosphate + CO2 + H2O. It catalyses the reaction D-ribulose 1,5-bisphosphate + O2 = 2-phosphoglycolate + (2R)-3-phosphoglycerate + 2 H(+). RuBisCO catalyzes two reactions: the carboxylation of D-ribulose 1,5-bisphosphate, the primary event in carbon dioxide fixation, as well as the oxidative fragmentation of the pentose substrate in the photorespiration process. Both reactions occur simultaneously and in competition at the same active site. In Nelsonia canescens (Blue pussyleaf), this protein is Ribulose bisphosphate carboxylase large chain.